Consider the following 293-residue polypeptide: Protease HtpX (293 aa).

Helical transmembrane passes span 4-24 (IALF…VLSL) and 34-54 (GLMI…LLMS). Residue His-139 participates in Zn(2+) binding. The active site involves Glu-140. His-143 contributes to the Zn(2+) binding site. 2 consecutive transmembrane segments (helical) span residues 158–178 (IVNT…SGFL) and 193–213 (LVYF…ASII). Glu-222 contributes to the Zn(2+) binding site.

It belongs to the peptidase M48B family. The cofactor is Zn(2+).

The protein resides in the cell inner membrane. The protein is Protease HtpX of Pectobacterium carotovorum subsp. carotovorum (strain PC1).